The primary structure comprises 126 residues: DNA-directed RNA polymerase I subunit RPA12 (126 aa).

Zn(2+) contacts are provided by Cys-20, Cys-23, Cys-38, Cys-41, Cys-87, and Cys-90. Residues 20 to 41 (CSDCGSVLPLPGAQDTVTCIRC) form a C4-type zinc finger. The TFIIS-type zinc finger occupies 83–123 (VDRRCPRCGHEGMAYHTRQMRSADEGQTVFYTCTNCKFQEK). The Hairpin signature appears at 106–107 (DE). Cys-115 and Cys-118 together coordinate Zn(2+).

Belongs to the archaeal RpoM/eukaryotic RPA12/RPB9/RPC11 RNA polymerase family. Component of the RNA polymerase I (Pol I) complex consisting of 13 subunits: a ten-subunit catalytic core composed of POLR1A/RPA1, POLR1B/RPA2, POLR1C/RPAC1, POLR1D/RPAC2, POLR1H/RPA12, POLR2E/RPABC1, POLR2F/RPABC2, POLR2H/RPABC3, POLR2K/RPABC4 and POLR2L/RPABC5; a mobile stalk subunit POLR1F/RPA43 protruding from the core and additional subunits homologous to general transcription factors POLR1E/RPA49 and POLR1G/RPA34. Part of Pol I pre-initiation complex (PIC), in which Pol I core assembles with RRN3 and promoter-bound UTBF and SL1/TIF-IB complex.

It is found in the nucleus. The protein resides in the nucleolus. Functionally, core component of RNA polymerase I (Pol I), a DNA-dependent RNA polymerase which synthesizes ribosomal RNA precursors using the four ribonucleoside triphosphates as substrates. Can mediate Pol I proofreading of the nascent RNA transcript. Anchors into the Pol I active site to monitor transcription fidelity and cleave mis-incorporated 5'-ribonucleotides. This chain is DNA-directed RNA polymerase I subunit RPA12, found in Homo sapiens (Human).